We begin with the raw amino-acid sequence, 158 residues long: Transcription elongation factor GreA (158 aa).

Belongs to the GreA/GreB family.

In terms of biological role, necessary for efficient RNA polymerase transcription elongation past template-encoded arresting sites. The arresting sites in DNA have the property of trapping a certain fraction of elongating RNA polymerases that pass through, resulting in locked ternary complexes. Cleavage of the nascent transcript by cleavage factors such as GreA or GreB allows the resumption of elongation from the new 3'terminus. GreA releases sequences of 2 to 3 nucleotides. This is Transcription elongation factor GreA from Psychrobacter cryohalolentis (strain ATCC BAA-1226 / DSM 17306 / VKM B-2378 / K5).